Here is a 171-residue protein sequence, read N- to C-terminus: Small ribosomal subunit protein uS13 (171 aa).

Residues histidine 128 to glutamate 171 are disordered. A compositionally biased stretch (acidic residues) spans glutamine 160–glutamate 171.

Belongs to the universal ribosomal protein uS13 family. As to quaternary structure, part of the 30S ribosomal subunit. Forms a loose heterodimer with protein S19. Forms two bridges to the 50S subunit in the 70S ribosome.

Functionally, located at the top of the head of the 30S subunit, it contacts several helices of the 16S rRNA. In the 70S ribosome it contacts the 23S rRNA (bridge B1a) and protein L5 of the 50S subunit (bridge B1b), connecting the 2 subunits; these bridges are implicated in subunit movement. This is Small ribosomal subunit protein uS13 from Halobacterium salinarum (strain ATCC 700922 / JCM 11081 / NRC-1) (Halobacterium halobium).